The primary structure comprises 520 residues: Interferon lambda receptor 1 (520 aa).

The first 20 residues, 1–20 (MAGPERWGPLLLCLLQAAPG), serve as a signal peptide directing secretion. At 21–228 (RPRLAPPQNV…LLEVPEANWA (208 aa)) the chain is on the extracellular side. Positions 26 to 126 (PPQNVTLLSQ…LDYLFEVEPA (101 aa)) constitute a Fibronectin type-III domain. 2 N-linked (GlcNAc...) asparagine glycosylation sites follow: Asn29 and Asn36. Cystine bridges form between Cys74–Cys82 and Cys86–Cys150. Asn142 and Asn169 each carry an N-linked (GlcNAc...) asparagine glycan. Cys195 and Cys217 form a disulfide bridge. A helical transmembrane segment spans residues 229–249 (FLVLPSLLILLLVIAAGGVIW). The Cytoplasmic segment spans residues 250–520 (KTLMGNPWFQ…GRTLGHYMAR (271 aa)). 2 disordered regions span residues 302-439 (VRPT…FLEE) and 477-520 (ESSP…YMAR). Residues 323-336 (AEDEEEEDEEDTED) are compositionally biased toward acidic residues. The segment covering 380–392 (SSAWDSSDRSWAS) has biased composition (low complexity). A compositionally biased stretch (acidic residues) spans 479–495 (SPEEEEEARESEIEDSD).

The protein belongs to the type II cytokine receptor family. Heterodimer with IL10RB. In terms of processing, ubiquitinated by FBXO45-containing E3 ligase leading to proteasomal degradation. In terms of tissue distribution, widely expressed.

It is found in the membrane. In terms of biological role, the IFNLR1/IL10RB dimer is a receptor for the cytokine ligands IFNL2 and IFNL3 and mediates their antiviral activity. The ligand/receptor complex stimulate the activation of the JAK/STAT signaling pathway leading to the expression of IFN-stimulated genes (ISG), which contribute to the antiviral state. Determines the cell type specificity of the lambda interferon action. Shows a more restricted pattern of expression in the epithelial tissues thereby limiting responses to lambda interferons primarily to epithelial cells of the respiratory, gastrointestinal, and reproductive tracts. Seems not to be essential for early virus-activated host defense in vaginal infection, but plays an important role in Toll-like receptor (TLR)-induced antiviral defense. Plays a significant role in the antiviral immune defense in the intestinal epithelium. The sequence is that of Interferon lambda receptor 1 (IFNLR1) from Homo sapiens (Human).